The following is a 257-amino-acid chain: Diphthine synthase (257 aa).

S-adenosyl-L-methionine-binding positions include Leu-9, Asp-85, Val-88, 113-114 (SI), Leu-164, Ala-207, and His-232.

The protein belongs to the diphthine synthase family. Homodimer.

It carries out the reaction 2-[(3S)-amino-3-carboxypropyl]-L-histidyl-[translation elongation factor 2] + 3 S-adenosyl-L-methionine = diphthine-[translation elongation factor 2] + 3 S-adenosyl-L-homocysteine + 3 H(+). The protein operates within protein modification; peptidyl-diphthamide biosynthesis. In terms of biological role, S-adenosyl-L-methionine-dependent methyltransferase that catalyzes the trimethylation of the amino group of the modified target histidine residue in translation elongation factor 2 (EF-2), to form an intermediate called diphthine. The three successive methylation reactions represent the second step of diphthamide biosynthesis. In Methanococcus aeolicus (strain ATCC BAA-1280 / DSM 17508 / OCM 812 / Nankai-3), this protein is Diphthine synthase.